The primary structure comprises 293 residues: Taste receptor type 2 member 143 (293 aa).

Over 1–6 (MPSTPT) the chain is Extracellular. Residues 7 to 27 (LIFIIIFYLVSLASMLQNGFM) traverse the membrane as a helical segment. Residues 28-55 (MIVLGREWMRNRTLPAADMIVASLASSR) are Cytoplasmic-facing. The helical transmembrane segment at 56–76 (FCLHGIAILANLLASFDFCYQ) threads the bilayer. The Extracellular segment spans residues 77–79 (ANL). The chain crosses the membrane as a helical span at residues 80–100 (IGILWDFTNTLIFWLTAWLAI). The Cytoplasmic portion of the chain corresponds to 101 to 127 (FYCVKISSFSHPVLFWLKWRISQLVPR). The helical transmembrane segment at 128–148 (LLVVSLIIGGLSAVISATGNF) threads the bilayer. Residues 149–181 (MANQMTISQGFHGNCTFGHMSLDFYRYYYLYHS) are Extracellular-facing. Residue Asn-162 is glycosylated (N-linked (GlcNAc...) asparagine). A helical membrane pass occupies residues 182 to 202 (VLMWFTPFFLFLVSVIVLMFS). The Cytoplasmic segment spans residues 203–227 (LYQHVEKMRGHRPGPWDLHTQAHTM). A helical transmembrane segment spans residues 228–248 (ALKSLTFFFIFYIFFFLALVI). At 249–264 (SSTKRKSMQSYYWARE) the chain is on the extracellular side. Residues 265-285 (AIIYTGIFLNSIILLFSNPKL) traverse the membrane as a helical segment. At 286 to 293 (RKALKMRF) the chain is on the cytoplasmic side.

This sequence belongs to the G-protein coupled receptor T2R family.

The protein localises to the membrane. Functionally, putative taste receptor which may play a role in the perception of bitterness. This is Taste receptor type 2 member 143 (Tas2r143) from Mus musculus (Mouse).